A 140-amino-acid chain; its full sequence is Small ribosomal subunit protein uS9A (140 aa).

This sequence belongs to the universal ribosomal protein uS9 family. In terms of assembly, component of the small ribosomal subunit (SSU). Mature yeast ribosomes consist of a small (40S) and a large (60S) subunit. The 40S small subunit contains 1 molecule of ribosomal RNA (18S rRNA) and at least 33 different proteins. The large 60S subunit contains 3 rRNA molecules (25S, 5.8S and 5S rRNA) and at least 46 different proteins.

It localises to the cytoplasm. Its function is as follows. Component of the ribosome, a large ribonucleoprotein complex responsible for the synthesis of proteins in the cell. The small ribosomal subunit (SSU) binds messenger RNAs (mRNAs) and translates the encoded message by selecting cognate aminoacyl-transfer RNA (tRNA) molecules. The large subunit (LSU) contains the ribosomal catalytic site termed the peptidyl transferase center (PTC), which catalyzes the formation of peptide bonds, thereby polymerizing the amino acids delivered by tRNAs into a polypeptide chain. The nascent polypeptides leave the ribosome through a tunnel in the LSU and interact with protein factors that function in enzymatic processing, targeting, and the membrane insertion of nascent chains at the exit of the ribosomal tunnel. This is Small ribosomal subunit protein uS9A (rps1601) from Schizosaccharomyces pombe (strain 972 / ATCC 24843) (Fission yeast).